The primary structure comprises 661 residues: Kininogen-1 (661 aa).

Residues 1 to 20 form the signal peptide; the sequence is MKLITTLLLCSGLLLTLTQG. A Cystatin kininogen-type 1 domain is found at 28-131; the sequence is CNDEAVFQAV…TQTCKIAPSK (104 aa). Intrachain disulfides connect cysteine 28–cysteine 631, cysteine 83–cysteine 94, cysteine 107–cysteine 125, cysteine 141–cysteine 144, cysteine 205–cysteine 217, cysteine 228–cysteine 247, cysteine 263–cysteine 266, cysteine 327–cysteine 339, and cysteine 350–cysteine 369. An N-linked (GlcNAc...) asparagine glycan is attached at asparagine 82. The 104-residue stretch at 150–253 folds into the Cystatin kininogen-type 2 domain; it reads TDSPDLEPVL…SQSCTLYSGD (104 aa). Residues asparagine 168 and asparagine 204 are each glycosylated (N-linked (GlcNAc...) asparagine). N-linked (GlcNAc...) asparagine glycosylation is present at asparagine 242. The 104-residue stretch at 272–375 folds into the Cystatin kininogen-type 3 domain; that stretch reads VDSPELKEVL…TVKCQALDMT (104 aa). A Phosphoserine modification is found at serine 331. Disordered stretches follow at residues 405 to 471, 485 to 583, and 626 to 661; these read YIAR…LGHG, DGDD…FQDS, and ATSP…DALS. Composition is skewed to basic residues over residues 434–471 and 492–526; these read KANK…LGHG and TVGH…HGKH. Positions 541–555 are enriched in low complexity; the sequence is TESLASSSEYSTTST. Residues 650-661 are compositionally biased toward acidic residues; sequence EFSDFDLLDALS.

In terms of assembly, isoform LMW interacts with CRISP3. Post-translationally, bradykinin is released from kininogen by plasma kallikrein. Phosphorylated by FAM20C in the extracellular medium. In terms of processing, bradykinin is inactivated by ACE, which removes the dipeptide Arg-Phe from its C-terminus. As to expression, plasma.

The protein localises to the secreted. It localises to the extracellular space. Its function is as follows. Kininogens are inhibitors of thiol proteases. HMW-kininogen plays an important role in blood coagulation by helping to position optimally prekallikrein and factor XI next to factor XII; HMW-kininogen inhibits the thrombin- and plasmin-induced aggregation of thrombocytes. LMW-kininogen inhibits the aggregation of thrombocytes. LMW-kininogen is in contrast to HMW-kininogen not involved in blood clotting. In terms of biological role, the active peptide bradykinin is a potent vasodilatator that is released from HMW-kininogen shows a variety of physiological effects: (A) influence in smooth muscle contraction, (B) induction of hypotension, (C) natriuresis and diuresis, (D) decrease in blood glucose level, (E) it is a mediator of inflammation and causes (E1) increase in vascular permeability, (E2) stimulation of nociceptors (4E3) release of other mediators of inflammation (e.g. prostaglandins), (F) it has a cardioprotective effect (directly via bradykinin action, indirectly via endothelium-derived relaxing factor action). The chain is Kininogen-1 (Kng1) from Mus musculus (Mouse).